The primary structure comprises 112 residues: Large ribosomal subunit protein bL17 (112 aa).

Belongs to the bacterial ribosomal protein bL17 family. In terms of assembly, part of the 50S ribosomal subunit. Contacts protein L32.

This chain is Large ribosomal subunit protein bL17, found in Thermoanaerobacter pseudethanolicus (strain ATCC 33223 / 39E) (Clostridium thermohydrosulfuricum).